A 196-amino-acid chain; its full sequence is Somatotropin (196 aa).

The signal sequence occupies residues 1–18 (MEKVVLLLSVLSLGVVCP). A Pyrrolidone carboxylic acid modification is found at Gln-19. His-35 is a binding site for Zn(2+). A disulfide bridge links Cys-69 with Cys-169. Glu-178 is a binding site for Zn(2+). Cys-186 and Cys-194 are oxidised to a cystine.

The protein belongs to the somatotropin/prolactin family.

Its subcellular location is the secreted. Growth hormone plays an important role in growth control and is involved in the regulation of several anabolic processes. Implicated as an osmoregulatory substance important for seawater adaptation. The polypeptide is Somatotropin (gh) (Siganus guttatus (Orange-spotted spinefoot)).